Reading from the N-terminus, the 746-residue chain is Protein O-mannosyl-transferase 1 (746 aa).

7 consecutive transmembrane segments (helical) span residues 30–50 (PLVV…LGLL), 90–110 (FGHM…NFLW), 121–141 (VPIW…VPMA), 144–164 (IVLE…LMLI), 176–196 (LLES…LKFF), 228–248 (MGIF…WNLI), and 266–286 (IVAL…VHLM). 3 MIR domains span residues 318-381 (PLEV…VKDP), 392-449 (PRPV…LDIV), and 453-513 (SNRD…VEEH). Residues Asn-435, Asn-471, and Asn-539 are each glycosylated (N-linked (GlcNAc...) asparagine). The next 3 membrane-spanning stretches (helical) occupy residues 597 to 617 (IVIW…FFWY), 636 to 656 (WVLA…PFFL), and 660 to 680 (VLFL…LPIV).

Belongs to the glycosyltransferase 39 family.

The protein resides in the endoplasmic reticulum membrane. The enzyme catalyses a di-trans,poly-cis-dolichyl beta-D-mannosyl phosphate + L-seryl-[protein] = 3-O-(alpha-D-mannosyl)-L-seryl-[protein] + a di-trans,poly-cis-dolichyl phosphate + H(+). The catalysed reaction is a di-trans,poly-cis-dolichyl beta-D-mannosyl phosphate + L-threonyl-[protein] = 3-O-(alpha-D-mannosyl)-L-threonyl-[protein] + a di-trans,poly-cis-dolichyl phosphate + H(+). It functions in the pathway protein modification; protein glycosylation. Transfers mannosyl residues to the hydroxyl group of serine or threonine residues. Coexpression of both POMT1 and POMT2 is necessary for enzyme activity, expression of either POMT1 or POMT2 alone is insufficient. Essentially dedicated to O-mannosylation of alpha-DAG1 and few other proteins but not of cadherins and protocaherins. The sequence is that of Protein O-mannosyl-transferase 1 (Pomt1) from Mus musculus (Mouse).